The sequence spans 64 residues: Lectin-A (64 aa).

Chitin-binding type-1 domains lie at 1–20 (APEC…QVVT) and 22–45 (DFDD…NTDA).

Post-translationally, glycosylated.

In terms of biological role, N-acetyl-D-glucosamine binding lectin. Shows low hemagglutinating activity towards human erythrocytes. Has low mitogenic activity towards human peripheral blood lymphocytes. The chain is Lectin-A from Phytolacca americana (American pokeweed).